The primary structure comprises 503 residues: ESX-5 secretion system protein EccD5 (503 aa).

The next 11 membrane-spanning stretches (helical) occupy residues 137–157 (IVAV…ATGV), 169–189 (LTTI…MLLL), 200–220 (VADI…AAAP), 224–244 (VGSP…ALAL), 250–270 (RLGI…AALA), 272–292 (MVAA…CVVA), 359–379 (FLSG…TSLC), 382–402 (HTGQ…FLLL), 413–433 (SITL…RYAL), 439–459 (LAVS…MAAA), and 480–500 (YLCL…YAAI).

This sequence belongs to the EccD/Snm4 family. Part of the ESX-5 / type VII secretion system (T7SS), which is composed of cytosolic and membrane components. The ESX-5 membrane complex is composed of EccB5, EccC5, EccD5 and EccE5.

It is found in the cell inner membrane. Its function is as follows. Part of the ESX-5 specialized secretion system, which is responsible for the secretion of EsxN and a number of PE_PGRS and PPE proteins, including PPE41. This Mycobacterium tuberculosis (strain CDC 1551 / Oshkosh) protein is ESX-5 secretion system protein EccD5.